Consider the following 1486-residue polypeptide: Chromosome partition protein MukB (1486 aa).

An ATP-binding site is contributed by 34–41; the sequence is GGNGAGKS. Coiled-coil stretches lie at residues 326–418, 444–480, and 509–603; these read LEAD…QYNQ, LETF…QAYQ, and RHLA…RAPV. The flexible hinge stretch occupies residues 666 to 783; the sequence is PGGSEDQRLN…EVPLFGRAAR (118 aa). Coiled-coil stretches lie at residues 835-923, 977-1115, and 1209-1266; these read EAEI…AKLE, EMLS…TAKA, and VEAI…QNVS.

The protein belongs to the SMC family. MukB subfamily. In terms of assembly, homodimerization via its hinge domain. Binds to DNA via its C-terminal region. Interacts, and probably forms a ternary complex, with MukE and MukF via its C-terminal region. The complex formation is stimulated by calcium or magnesium. Interacts with tubulin-related protein FtsZ.

It is found in the cytoplasm. The protein resides in the nucleoid. Functionally, plays a central role in chromosome condensation, segregation and cell cycle progression. Functions as a homodimer, which is essential for chromosome partition. Involved in negative DNA supercoiling in vivo, and by this means organize and compact chromosomes. May achieve or facilitate chromosome segregation by condensation DNA from both sides of a centrally located replisome during cell division. This chain is Chromosome partition protein MukB, found in Escherichia fergusonii (strain ATCC 35469 / DSM 13698 / CCUG 18766 / IAM 14443 / JCM 21226 / LMG 7866 / NBRC 102419 / NCTC 12128 / CDC 0568-73).